Here is a 188-residue protein sequence, read N- to C-terminus: Inosine triphosphate pyrophosphatase (188 aa).

12–17 contributes to the ITP binding site; it reads TGNKNK. Glutamate 40 contributes to the Mg(2+) binding site. Residues lysine 52, 68 to 69, lysine 85, 144 to 147, lysine 165, and 170 to 171 contribute to the ITP site; these read DT, FGWD, and HR.

It belongs to the HAM1 NTPase family. As to quaternary structure, homodimer. Requires Mg(2+) as cofactor. Mn(2+) serves as cofactor.

It is found in the cytoplasm. It localises to the nucleus. The catalysed reaction is ITP + H2O = IMP + diphosphate + H(+). It catalyses the reaction dITP + H2O = dIMP + diphosphate + H(+). The enzyme catalyses XTP + H2O = XMP + diphosphate + H(+). Its function is as follows. Pyrophosphatase that hydrolyzes non-canonical purine nucleotides such as inosine triphosphate (ITP), deoxyinosine triphosphate (dITP) or xanthosine 5'-triphosphate (XTP) to their respective monophosphate derivatives. The enzyme does not distinguish between the deoxy- and ribose forms. Probably excludes non-canonical purines from RNA and DNA precursor pools, thus preventing their incorporation into RNA and DNA and avoiding chromosomal lesions. The chain is Inosine triphosphate pyrophosphatase from Phaeosphaeria nodorum (strain SN15 / ATCC MYA-4574 / FGSC 10173) (Glume blotch fungus).